A 336-amino-acid polypeptide reads, in one-letter code: Heme A synthase (336 aa).

8 helical membrane passes run L5 to I25, G92 to I112, I117 to M137, L153 to K173, L191 to V211, F253 to L273, V284 to L304, and V307 to I327. Residue H255 coordinates heme. H315 contributes to the heme binding site.

Belongs to the COX15/CtaA family. Type 2 subfamily. Interacts with CtaB. Requires heme b as cofactor.

The protein localises to the cell membrane. The catalysed reaction is Fe(II)-heme o + 2 A + H2O = Fe(II)-heme a + 2 AH2. The protein operates within porphyrin-containing compound metabolism; heme A biosynthesis; heme A from heme O: step 1/1. Catalyzes the conversion of heme O to heme A by two successive hydroxylations of the methyl group at C8. The first hydroxylation forms heme I, the second hydroxylation results in an unstable dihydroxymethyl group, which spontaneously dehydrates, resulting in the formyl group of heme A. The sequence is that of Heme A synthase from Rickettsia bellii (strain RML369-C).